The following is an 80-amino-acid chain: Conotoxin Lt6.2 (80 aa).

An N-terminal signal peptide occupies residues 1 to 24; sequence MKLTRVLIIAVLFLTAYQLTTVET. Residues 25-47 constitute a propeptide that is removed on maturation; the sequence is YSRGKWMHRALRSTGKNPKVTRE. 3 cysteine pairs are disulfide-bonded: C48/C62, C55/C66, and C61/C73.

It belongs to the conotoxin O1 superfamily. Expressed by the venom duct.

It localises to the secreted. The protein is Conotoxin Lt6.2 of Conus litteratus (Lettered cone).